The following is a 301-amino-acid chain: Acetylglutamate kinase (301 aa).

Substrate is bound by residues 72–73 (GG), R94, and N199.

Belongs to the acetylglutamate kinase family. ArgB subfamily.

It localises to the cytoplasm. The enzyme catalyses N-acetyl-L-glutamate + ATP = N-acetyl-L-glutamyl 5-phosphate + ADP. It participates in amino-acid biosynthesis; L-arginine biosynthesis; N(2)-acetyl-L-ornithine from L-glutamate: step 2/4. Functionally, catalyzes the ATP-dependent phosphorylation of N-acetyl-L-glutamate. This is Acetylglutamate kinase from Bartonella tribocorum (strain CIP 105476 / IBS 506).